Reading from the N-terminus, the 377-residue chain is Sodium-dependent organic anion transporter (377 aa).

Over Met1 to Asn29 the chain is Extracellular. The N-linked (GlcNAc...) asparagine glycan is linked to Asn4. A helical membrane pass occupies residues Leu30 to Gly50. Topologically, residues Cys51 to Gly67 are cytoplasmic. The chain crosses the membrane as a helical span at residues Ile68 to Ile88. The Extracellular segment spans residues Ser89–Ala97. Residues Ile98–Trp118 traverse the membrane as a helical segment. The Cytoplasmic portion of the chain corresponds to Val119 to Ser133. The chain crosses the membrane as a helical span at residues Thr134 to Leu154. The Extracellular segment spans residues Glu155 to Thr159. Residue Asn157 is glycosylated (N-linked (GlcNAc...) asparagine). A helical transmembrane segment spans residues Ile160–Ile180. Topologically, residues Tyr181 to Lys195 are cytoplasmic. Residues Ile196–Met216 form a helical membrane-spanning segment. The Extracellular portion of the chain corresponds to Lys217 to Asp223. The helical transmembrane segment at Ile224 to Leu244 threads the bilayer. Over Ala245–Thr257 the chain is Cytoplasmic. The chain crosses the membrane as a helical span at residues Ile258–Phe278. The Extracellular portion of the chain corresponds to Thr279–Gln285. Residues Ile286–Ala306 form a helical membrane-spanning segment. At Ala307–Lys377 the chain is on the cytoplasmic side. Positions His319 to Lys377 are disordered.

It belongs to the bile acid:sodium symporter (BASS) (TC 2.A.28) family. Post-translationally, glycosylated.

It is found in the membrane. It carries out the reaction estrone 3-sulfate(out) + 2 Na(+)(out) = estrone 3-sulfate(in) + 2 Na(+)(in). It catalyses the reaction 17beta-estradiol 3-sulfate(out) + 2 Na(+)(out) = 17beta-estradiol 3-sulfate(in) + 2 Na(+)(in). The catalysed reaction is dehydroepiandrosterone 3-sulfate(out) + 2 Na(+)(out) = dehydroepiandrosterone 3-sulfate(in) + 2 Na(+)(in). The enzyme catalyses androst-5-ene-diol 3-sulfate(out) + 2 Na(+)(out) = androst-5-ene-diol 3-sulfate(in) + 2 Na(+)(in). It carries out the reaction pregnenolone sulfate(out) + 2 Na(+)(out) = pregnenolone sulfate(in) + 2 Na(+)(in). It catalyses the reaction taurolithocholate 3-sulfate(out) + 2 Na(+)(out) = taurolithocholate 3-sulfate(in) + 2 Na(+)(in). The catalysed reaction is androsterone 3alpha-sulfate(out) + 2 Na(+)(out) = androsterone 3alpha-sulfate(in) + 2 Na(+)(in). The enzyme catalyses 5alpha-dihydrotestosterone sulfate(out) + 2 Na(+)(out) = 5alpha-dihydrotestosterone sulfate(in) + 2 Na(+)(in). It carries out the reaction 17beta-estradiol 17-sulfate(out) + 2 Na(+)(out) = 17beta-estradiol 17-sulfate(in) + 2 Na(+)(in). It catalyses the reaction 17alpha-hydroxypregnenolone 3-sulfate(out) + 2 Na(+)(out) = 17alpha-hydroxypregnenolone 3-sulfate(in) + 2 Na(+)(in). The catalysed reaction is epiandrosterone 3-sulfate(out) + 2 Na(+)(out) = epiandrosterone 3-sulfate(in) + 2 Na(+)(in). The enzyme catalyses epitestosterone 17-sulfate(out) + 2 Na(+)(out) = epitestosterone 17-sulfate(in) + 2 Na(+)(in). It carries out the reaction testosterone 17-sulfate(out) + 2 Na(+)(out) = testosterone 17-sulfate(in) + 2 Na(+)(in). It catalyses the reaction 16alpha-hydroxydehydroepiandrosterone 3-sulfate(out) + 2 Na(+)(out) = 16alpha-hydroxydehydroepiandrosterone 3-sulfate(in) + 2 Na(+)(in). Functionally, transports sulfoconjugated steroid hormones from the extracellular compartment into the cytosol in a sodium-dependent manner without hydrolysis. Steroid sulfate hormones are commonly considered to be biologically inactive metabolites, that may be activated by steroid sulfatases into free steroids. May play an important role by delivering sulfoconjugated steroids to specific target cells in reproductive organs. May play a role transporting the estriol precursor 16alpha-hydroxydehydroepiandrosterone 3-sulfate (16a-OH-DHEAS) at the fetal blood vessel endothelium. Can also transport other sulfoconjugated molecules such as taurolithocholic acid-3-sulfate and sulfoconjugated pyrenes. The chain is Sodium-dependent organic anion transporter (SLC10A6) from Bos taurus (Bovine).